Here is a 127-residue protein sequence, read N- to C-terminus: Small ribosomal subunit protein uS11 (127 aa).

This sequence belongs to the universal ribosomal protein uS11 family. In terms of assembly, part of the 30S ribosomal subunit. Interacts with proteins S7 and S18. Binds to IF-3.

Located on the platform of the 30S subunit, it bridges several disparate RNA helices of the 16S rRNA. Forms part of the Shine-Dalgarno cleft in the 70S ribosome. The protein is Small ribosomal subunit protein uS11 of Rickettsia bellii (strain RML369-C).